A 117-amino-acid chain; its full sequence is Putative membrane protein insertion efficiency factor (117 aa).

It belongs to the UPF0161 family.

The protein localises to the cell inner membrane. In terms of biological role, could be involved in insertion of integral membrane proteins into the membrane. In Nitrobacter winogradskyi (strain ATCC 25391 / DSM 10237 / CIP 104748 / NCIMB 11846 / Nb-255), this protein is Putative membrane protein insertion efficiency factor.